Here is a 517-residue protein sequence, read N- to C-terminus: GMP synthase [glutamine-hydrolyzing] (517 aa).

Positions 11–202 constitute a Glutamine amidotransferase type-1 domain; sequence KIIALDFGSQ…AFDVCGAKAN (192 aa). The Nucleophile role is filled by cysteine 88. Residues histidine 176 and glutamate 178 contribute to the active site. Positions 203-392 constitute a GMPS ATP-PPase domain; sequence WTMDDFIDMQ…LGIPHELVWR (190 aa). 230–236 is a binding site for ATP; it reads SGGVDSS.

Homodimer.

It carries out the reaction XMP + L-glutamine + ATP + H2O = GMP + L-glutamate + AMP + diphosphate + 2 H(+). It participates in purine metabolism; GMP biosynthesis; GMP from XMP (L-Gln route): step 1/1. Functionally, catalyzes the synthesis of GMP from XMP. The polypeptide is GMP synthase [glutamine-hydrolyzing] (Limosilactobacillus reuteri (strain DSM 20016) (Lactobacillus reuteri)).